Reading from the N-terminus, the 121-residue chain is Fumarate reductase subunit D (121 aa).

The next 3 helical transmembrane spans lie at 22 to 42 (GVWF…LLPL), 57 to 77 (AFVS…LPMW), and 100 to 120 (YACY…VIQL).

The protein belongs to the FrdD family. Part of an enzyme complex containing four subunits: a flavoprotein (FrdA), an iron-sulfur protein (FrdB), and two hydrophobic anchor proteins (FrdC and FrdD).

It localises to the cell inner membrane. Anchors the catalytic components of the fumarate reductase complex to the cell membrane, binds quinones. The protein is Fumarate reductase subunit D of Shewanella putrefaciens (strain CN-32 / ATCC BAA-453).